The chain runs to 20 residues: Pregnancy-associated glycoprotein 60H (20 aa).

A glycan (N-linked (GlcNAc...) asparagine) is linked at N4.

Belongs to the peptidase A1 family. Chorionic epithelium (trophectoderm) and placental cotyledons.

It localises to the secreted. It is found in the extracellular space. In Bison bonasus (European bison), this protein is Pregnancy-associated glycoprotein 60H.